A 282-amino-acid chain; its full sequence is DegV domain-containing protein SPy_0865/M5005_Spy0672 (282 aa).

A DegV domain is found at 3-280; the sequence is LAVITDSTAT…EGAIAFGVTP (278 aa). Residues Thr61 and Ser94 each contribute to the hexadecanoate site.

Functionally, may bind long-chain fatty acids, such as palmitate, and may play a role in lipid transport or fatty acid metabolism. This chain is DegV domain-containing protein SPy_0865/M5005_Spy0672, found in Streptococcus pyogenes serotype M1.